The primary structure comprises 159 residues: Protein-export protein SecB (159 aa).

The protein belongs to the SecB family. As to quaternary structure, homotetramer, a dimer of dimers. One homotetramer interacts with 1 SecA dimer.

It localises to the cytoplasm. In terms of biological role, one of the proteins required for the normal export of preproteins out of the cell cytoplasm. It is a molecular chaperone that binds to a subset of precursor proteins, maintaining them in a translocation-competent state. It also specifically binds to its receptor SecA. The chain is Protein-export protein SecB from Marinomonas sp. (strain MWYL1).